The chain runs to 500 residues: Vitamin D(3) 25-hydroxylase (500 aa).

Residue Cys-446 coordinates heme.

The protein belongs to the cytochrome P450 family. Requires heme as cofactor. In terms of tissue distribution, found in liver and kidney.

The protein localises to the endoplasmic reticulum membrane. It localises to the microsome membrane. The catalysed reaction is calciol + reduced [NADPH--hemoprotein reductase] + O2 = calcidiol + oxidized [NADPH--hemoprotein reductase] + H2O + H(+). It carries out the reaction alfacalcidol + reduced [NADPH--hemoprotein reductase] + O2 = calcitriol + oxidized [NADPH--hemoprotein reductase] + H2O + H(+). It catalyses the reaction dodecanoate + reduced [NADPH--hemoprotein reductase] + O2 = 12-hydroxydodecanoate + oxidized [NADPH--hemoprotein reductase] + H2O + H(+). The enzyme catalyses dodecanoate + reduced [NADPH--hemoprotein reductase] + O2 = 11-hydroxydodecanoate + oxidized [NADPH--hemoprotein reductase] + H2O + H(+). The catalysed reaction is 5beta-cholestane-3alpha,7alpha-diol + reduced [NADPH--hemoprotein reductase] + O2 = 5beta-cholestane-3alpha,7alpha,25-triol + oxidized [NADPH--hemoprotein reductase] + H2O + H(+). It carries out the reaction 5beta-cholestane-3alpha,7alpha,12alpha-triol + reduced [NADPH--hemoprotein reductase] + O2 = 5beta-cholestane-3alpha,7alpha,12alpha,25-tetrol + oxidized [NADPH--hemoprotein reductase] + H2O + H(+). Functionally, catalyzes the 25-hydroxylation of vitamin D(3) (calciol), 1alpha-hydroxyvitamin D(3) (alphacalcidiol) and some C27 steroids. In addition the enzyme catalyzes the hydroxylation of positions 11 and 12 of dodecanoate. The chain is Vitamin D(3) 25-hydroxylase (CYP2D25) from Sus scrofa (Pig).